We begin with the raw amino-acid sequence, 329 residues long: 4-diphosphocytidyl-2-C-methyl-D-erythritol kinase (329 aa).

The active site involves lysine 14. ATP is bound at residue 117 to 127 (PSGAGMGGASS). Residue aspartate 166 is part of the active site.

The protein belongs to the GHMP kinase family. IspE subfamily.

The catalysed reaction is 4-CDP-2-C-methyl-D-erythritol + ATP = 4-CDP-2-C-methyl-D-erythritol 2-phosphate + ADP + H(+). It functions in the pathway isoprenoid biosynthesis; isopentenyl diphosphate biosynthesis via DXP pathway; isopentenyl diphosphate from 1-deoxy-D-xylulose 5-phosphate: step 3/6. Catalyzes the phosphorylation of the position 2 hydroxy group of 4-diphosphocytidyl-2C-methyl-D-erythritol. The polypeptide is 4-diphosphocytidyl-2-C-methyl-D-erythritol kinase (Rhodopirellula baltica (strain DSM 10527 / NCIMB 13988 / SH1)).